The chain runs to 331 residues: GTPase Obg (331 aa).

Positions 1–159 (MQFIDQARIA…RELQLELKLL (159 aa)) constitute an Obg domain. The OBG-type G domain occupies 160-328 (AEVGLVGLPN…LLQQVWQELG (169 aa)). GTP-binding positions include 166–173 (GLPNAGKS), 191–195 (FTTLV), 213–216 (DIPG), 280–283 (SKSE), and 309–311 (SAV). Mg(2+) is bound by residues Ser-173 and Thr-193.

It belongs to the TRAFAC class OBG-HflX-like GTPase superfamily. OBG GTPase family. In terms of assembly, monomer. Mg(2+) is required as a cofactor.

It localises to the cytoplasm. Its function is as follows. An essential GTPase which binds GTP, GDP and possibly (p)ppGpp with moderate affinity, with high nucleotide exchange rates and a fairly low GTP hydrolysis rate. Plays a role in control of the cell cycle, stress response, ribosome biogenesis and in those bacteria that undergo differentiation, in morphogenesis control. This chain is GTPase Obg, found in Synechococcus sp. (strain RCC307).